A 466-amino-acid polypeptide reads, in one-letter code: Citrate synthase, mitochondrial (466 aa).

The N-terminal 27 residues, 1 to 27 (MALLTAAARLLGTKNASCLVLAARHAS), are a transit peptide targeting the mitochondrion. Residues 2 to 21 (ALLTAAARLLGTKNASCLVL) carry the SIFI-degron motif. The residue at position 57 (lysine 57) is an N6-succinyllysine. Lysine 76 is subject to N6-acetyllysine; alternate. Lysine 76 carries the post-translational modification N6-succinyllysine; alternate. N6-succinyllysine occurs at positions 103 and 193. Residue histidine 301 is part of the active site. N6-acetyllysine; alternate is present on residues lysine 321 and lysine 327. Residues lysine 321 and lysine 327 each carry the N6-succinyllysine; alternate modification. Residue histidine 347 is part of the active site. Arginine 356 lines the oxaloacetate pocket. Lysine 375 carries the N6-acetyllysine; alternate modification. Lysine 375 carries the N6-succinyllysine; alternate modification. At lysine 382 the chain carries N6-acetyllysine. Residue lysine 393 is modified to N6-acetyllysine; alternate. At lysine 393 the chain carries N6-succinyllysine; alternate. Lysine 395 bears the N6,N6,N6-trimethyllysine mark. The active site involves aspartate 402. Oxaloacetate-binding residues include arginine 428 and arginine 448. N6-succinyllysine is present on lysine 450. N6-acetyllysine; alternate is present on lysine 459. The residue at position 459 (lysine 459) is an N6-succinyllysine; alternate.

The protein belongs to the citrate synthase family. Homodimer. In terms of processing, methylated. Trimethylation at Lys-395 by CSKMT decreases citrate synthase activity. In response to mitochondrial stress, the precursor protein is ubiquitinated by the SIFI complex in the cytoplasm before mitochondrial import, leading to its degradation. Within the SIFI complex, UBR4 initiates ubiquitin chain that are further elongated or branched by KCMF1.

The protein resides in the mitochondrion matrix. It carries out the reaction oxaloacetate + acetyl-CoA + H2O = citrate + CoA + H(+). It participates in carbohydrate metabolism; tricarboxylic acid cycle; isocitrate from oxaloacetate: step 1/2. Its function is as follows. Key enzyme of the Krebs tricarboxylic acid cycle which catalyzes the synthesis of citrate from acetyl coenzyme A and oxaloacetate. This Homo sapiens (Human) protein is Citrate synthase, mitochondrial (CS).